A 475-amino-acid polypeptide reads, in one-letter code: Ribulose bisphosphate carboxylase large chain (475 aa).

A propeptide spanning residues 1 to 2 (MS) is cleaved from the precursor. Residue proline 3 is modified to N-acetylproline. Residue lysine 14 is modified to N6,N6,N6-trimethyllysine. The substrate site is built by asparagine 123 and threonine 173. The active-site Proton acceptor is lysine 175. Lysine 177 serves as a coordination point for substrate. Lysine 201, aspartate 203, and glutamate 204 together coordinate Mg(2+). Lysine 201 is modified (N6-carboxylysine). Histidine 294 serves as the catalytic Proton acceptor. Residues arginine 295, histidine 327, and serine 379 each coordinate substrate.

The protein belongs to the RuBisCO large chain family. Type I subfamily. As to quaternary structure, heterohexadecamer of 8 large chains and 8 small chains; disulfide-linked. The disulfide link is formed within the large subunit homodimers. Mg(2+) serves as cofactor. The disulfide bond which can form in the large chain dimeric partners within the hexadecamer appears to be associated with oxidative stress and protein turnover.

It is found in the plastid. Its subcellular location is the chloroplast. The enzyme catalyses 2 (2R)-3-phosphoglycerate + 2 H(+) = D-ribulose 1,5-bisphosphate + CO2 + H2O. It carries out the reaction D-ribulose 1,5-bisphosphate + O2 = 2-phosphoglycolate + (2R)-3-phosphoglycerate + 2 H(+). Functionally, ruBisCO catalyzes two reactions: the carboxylation of D-ribulose 1,5-bisphosphate, the primary event in carbon dioxide fixation, as well as the oxidative fragmentation of the pentose substrate in the photorespiration process. Both reactions occur simultaneously and in competition at the same active site. This chain is Ribulose bisphosphate carboxylase large chain, found in Zygnema circumcarinatum (Green alga).